We begin with the raw amino-acid sequence, 242 residues long: Venom nerve growth factor 3 (242 aa).

The N-terminal stretch at 1-18 (MSMLCYTLIIAFLIGIWA) is a signal peptide. Positions 19 to 125 (APQSEDNVPL…ALNRNIQAKR (107 aa)) are excised as a propeptide. Residues 45–69 (HEGLKTSRNTDQRHPAPKKVDDQEP) form a disordered region. The span at 46–66 (EGLKTSRNTDQRHPAPKKVDD) shows a compositional bias: basic and acidic residues. Cystine bridges form between cysteine 139–cysteine 203, cysteine 181–cysteine 231, and cysteine 191–cysteine 233.

It belongs to the NGF-beta family. In terms of assembly, homodimer; non-covalently linked. In terms of tissue distribution, expressed by the venom gland.

The protein localises to the secreted. Its function is as follows. Nerve growth factor is important for the development and maintenance of the sympathetic and sensory nervous systems. It stimulates division and differentiation of sympathetic and embryonic sensory neurons as well as basal forebrain cholinergic neurons in the brain. Its relevance in the snake venom is not clear. However, it has been shown to inhibit metalloproteinase-dependent proteolysis of platelet glycoprotein Ib alpha, suggesting a metalloproteinase inhibition to prevent metalloprotease autodigestion and/or protection against prey proteases. Binds a lipid between the two protein chains in the homodimer. The lipid-bound form promotes histamine relase from mouse mast cells, contrary to the lipid-free form. This chain is Venom nerve growth factor 3, found in Pseudechis australis (Mulga snake).